A 594-amino-acid polypeptide reads, in one-letter code: UvrABC system protein C (594 aa).

Residues 14-91 enclose the GIY-YIG domain; the sequence is DQPGCYLMKD…IKKYDPKYNI (78 aa). The UVR domain maps to 196–231; the sequence is KEVRSELEIKMYEASEKLEFERAKELRDQIAHIDAI.

Belongs to the UvrC family. In terms of assembly, interacts with UvrB in an incision complex.

It localises to the cytoplasm. The UvrABC repair system catalyzes the recognition and processing of DNA lesions. UvrC both incises the 5' and 3' sides of the lesion. The N-terminal half is responsible for the 3' incision and the C-terminal half is responsible for the 5' incision. This chain is UvrABC system protein C, found in Bacillus cereus (strain B4264).